A 399-amino-acid chain; its full sequence is S-adenosylmethionine synthase (399 aa).

His-16 provides a ligand contact to ATP. Asp-18 serves as a coordination point for Mg(2+). Glu-44 contributes to the K(+) binding site. Glu-57 and Gln-100 together coordinate L-methionine. The interval 100–110 (QSPDIAQGVDD) is flexible loop. ATP is bound by residues 174 to 176 (DAK), 241 to 242 (RF), Asp-250, 256 to 257 (RK), Ala-273, and Lys-277. Asp-250 provides a ligand contact to L-methionine. Lys-281 provides a ligand contact to L-methionine.

This sequence belongs to the AdoMet synthase family. Homotetramer; dimer of dimers. It depends on Mg(2+) as a cofactor. K(+) is required as a cofactor.

It is found in the cytoplasm. It catalyses the reaction L-methionine + ATP + H2O = S-adenosyl-L-methionine + phosphate + diphosphate. The protein operates within amino-acid biosynthesis; S-adenosyl-L-methionine biosynthesis; S-adenosyl-L-methionine from L-methionine: step 1/1. Catalyzes the formation of S-adenosylmethionine (AdoMet) from methionine and ATP. The overall synthetic reaction is composed of two sequential steps, AdoMet formation and the subsequent tripolyphosphate hydrolysis which occurs prior to release of AdoMet from the enzyme. This is S-adenosylmethionine synthase from Latilactobacillus sakei subsp. sakei (strain 23K) (Lactobacillus sakei subsp. sakei).